A 490-amino-acid chain; its full sequence is Aspartyl/glutamyl-tRNA(Asn/Gln) amidotransferase subunit B (490 aa).

The protein belongs to the GatB/GatE family. GatB subfamily. In terms of assembly, heterotrimer of A, B and C subunits.

The enzyme catalyses L-glutamyl-tRNA(Gln) + L-glutamine + ATP + H2O = L-glutaminyl-tRNA(Gln) + L-glutamate + ADP + phosphate + H(+). It carries out the reaction L-aspartyl-tRNA(Asn) + L-glutamine + ATP + H2O = L-asparaginyl-tRNA(Asn) + L-glutamate + ADP + phosphate + 2 H(+). Allows the formation of correctly charged Asn-tRNA(Asn) or Gln-tRNA(Gln) through the transamidation of misacylated Asp-tRNA(Asn) or Glu-tRNA(Gln) in organisms which lack either or both of asparaginyl-tRNA or glutaminyl-tRNA synthetases. The reaction takes place in the presence of glutamine and ATP through an activated phospho-Asp-tRNA(Asn) or phospho-Glu-tRNA(Gln). In Synechococcus sp. (strain JA-3-3Ab) (Cyanobacteria bacterium Yellowstone A-Prime), this protein is Aspartyl/glutamyl-tRNA(Asn/Gln) amidotransferase subunit B.